The following is a 397-amino-acid chain: Elongation factor Tu 1 (397 aa).

A tr-type G domain is found at 10-206; it reads KPHVNIGTIG…AVDENIPQPE (197 aa). Residues 19-26 are G1; the sequence is GHIDHGKT. Position 19 to 26 (19 to 26) interacts with GTP; the sequence is GHIDHGKT. Thr-26 provides a ligand contact to Mg(2+). The interval 62–66 is G2; it reads GITIS. The G3 stretch occupies residues 83 to 86; it reads DCPG. Residues 83–87 and 138–141 each bind GTP; these read DCPGH and NKAD. The tract at residues 138–141 is G4; that stretch reads NKAD. Positions 176 to 178 are G5; the sequence is SAL.

This sequence belongs to the TRAFAC class translation factor GTPase superfamily. Classic translation factor GTPase family. EF-Tu/EF-1A subfamily. In terms of assembly, monomer.

The protein localises to the cytoplasm. The enzyme catalyses GTP + H2O = GDP + phosphate + H(+). Functionally, GTP hydrolase that promotes the GTP-dependent binding of aminoacyl-tRNA to the A-site of ribosomes during protein biosynthesis. The sequence is that of Elongation factor Tu 1 from Streptomyces avermitilis (strain ATCC 31267 / DSM 46492 / JCM 5070 / NBRC 14893 / NCIMB 12804 / NRRL 8165 / MA-4680).